Reading from the N-terminus, the 80-residue chain is Exodeoxyribonuclease 7 small subunit (80 aa).

The protein belongs to the XseB family. As to quaternary structure, heterooligomer composed of large and small subunits.

It is found in the cytoplasm. The catalysed reaction is Exonucleolytic cleavage in either 5'- to 3'- or 3'- to 5'-direction to yield nucleoside 5'-phosphates.. Bidirectionally degrades single-stranded DNA into large acid-insoluble oligonucleotides, which are then degraded further into small acid-soluble oligonucleotides. The sequence is that of Exodeoxyribonuclease 7 small subunit from Halalkalibacterium halodurans (strain ATCC BAA-125 / DSM 18197 / FERM 7344 / JCM 9153 / C-125) (Bacillus halodurans).